Here is a 1822-residue protein sequence, read N- to C-terminus: MTSLKRSQTERPVTADRASVVSTDGTPKVHTDDFYMRRFRSQNGSLGSSVMAAVGPPRSEGPHHITSTPGVPKMGVRARIADWPPRKENVKESSRSSQEIETSSCLESLSSKGSPVSQGSSVSLNSNDSAMLKSIQNTLKNKTGPAESMDSRFLMPEAYPSSPRKALRRIRQRSNSDITISELDVDSFDECISPTYKSGPSLHREYGSTSSIDKQGTSGESFFGLLKGYKDDRADRGPTPTKLSDFLITGGGKGSGFSLDVIDGPISQRENLRLFKEREKPLKRRSKSETGDSSIFRKLRNAKGEELGKSSDLEDNRSEDSVRPWTCPKCFAHYDVQSILFDLNEAIMNRHNVIKRRNTTTGASAAAVASLVSGPLSHSTSFSSPMGSTEDFNSKGSLGMDQGDDKSNELVMSCPYFRNEIGGEGERKISLSKSNSGSFSGCESTSFESALSSHCTNAGVAVLEVPKESLMLHLDRVRRYTVEHVDLGAYYYRKCFYQKEHWNYFGADENLGPVAVSIRREKPEDMKENGSPYNYRIIFRTSELMTLRGSVLEDAIPSTAKHSTARGLPLKEVLEHVIPELNVQCLRLAFNTPKVTEQLMKLDEQGLNYQQKVGIMYCKAGQSTEEEMYNTPKVTEQFMKLDEQGLNYQQKVGIMYCKAGQSTEEEMYNNESAGPAFEEFLQLLGERVRLKGFEKYRAQLDTKTDSTGTHSLYTTYKDYEIMFHVSTMLPYTPNNKQQLLRKRHIGNDIVTIVFQEPGAQPFSPKNIRSHFQHVFVIVRAHNPCTESVCYSVAVTRSRDVPSFGPPIPKGVTFPKSNVFRDFLLAKVINAENAAHKSEKFRAMATRTRQEYLKDLAEKNVTNTPIDPSGKFPFISLASKKKEKSKPYPGAELSSMGAIVWAVRAKDYNKAMEFDCLLGISNEFIVLIEQETKSVVFNCSCRDVIGWTSSDSSLKIFYERGECISVESFMSSEDIKEIVKRLQFVSKGCESVEMTLRRNGLGQLGFHVNYEGIVADVEPYGYAWQAGLKQGSRLVEICKVAVATLSHEQMIDLLRTSVTVKVVIIPPHDDCTPRRSCSETYRMPVMEYKMNEGVSYEYKFPFRSNNKWQRNAGKGAHSPQVPLQLQSPMISRVNAGKGDGKMPLPERAANIPRSISSDGRPLERRLSPGSDIYVTVSSMALARSQCRNSPSNLSSSSETGSGGGTYRQKSMPEGFGVSRRSPASIDRQNTQSDIGGSGKSTPSWQRSEDSLADQMEPTCHLPAVSKVLPAFRESPSGRLMRQDPVVHLSPNKQGHSDSHYSSHSSSNTLSSNASSAHSDEKWYDGDRTESDLNSYNYLQGTSADSGIDTASYGLSHGSTASLGASTSSPRSGPGKEKVAPLWHSSSEVLSLADRTLETEGHGMDRKTESSLSLDIHSKSQGGSSPLTRENSTFSINDATSHTSTMSSRHSASPVVFSSARSSPKEELHPTTSSQLAPSFSSSSSSSSGPRTFYPRQGATSKYLIGWKKPEGTINSVGFMDTRKRHQSDGNEIAHTRLRASTRDLRASPKPTSKSTIEEDLKKLIDLESPTPESQKNFKFHGLSSPQSPFPSTPTSRRALHRTLSDESIYSSQREHFFTSRASLLDQALPNDVFFSSTYPSLPKSLPLRRPSYTLGMKSLHGEFFASDSSLTDIQETRRQPIPDPGLMPLPDTASDLDWSNLVDAAKAYEVQRASFFAASDENHRPLSAASNSDQLEEQALVQMKSYSSSKDSSPTLASKVDQLEGMLKMLREDLKKEKEDKAHLQAEVEHLREDNLRLQEESQNASDKLKKFTEWVFNTIDMS.

Disordered stretches follow at residues 1 to 30 (MTSLKRSQTERPVTADRASVVSTDGTPKVH) and 47 to 125 (GSSV…VSLN). Basic and acidic residues predominate over residues 84–94 (PPRKENVKESS). Residues 95–125 (RSSQEIETSSCLESLSSKGSPVSQGSSVSLN) show a composition bias toward low complexity. Serine 162, serine 187, serine 193, serine 208, serine 255, and serine 288 each carry phosphoserine. Residues 277-297 (EREKPLKRRSKSETGDSSIFR) are disordered. The Rap-GAP domain maps to 638-855 (FMKLDEQGLN…RTRQEYLKDL (218 aa)). The PDZ domain maps to 992 to 1068 (EMTLRRNGLG…VKVVIIPPHD (77 aa)). Phosphoserine is present on residues serine 1117, serine 1126, serine 1155, serine 1166, serine 1188, serine 1209, and serine 1220. The tract at residues 1134–1165 (AGKGDGKMPLPERAANIPRSISSDGRPLERRL) is disordered. Residues 1183 to 1252 (SQCRNSPSNL…WQRSEDSLAD (70 aa)) form a disordered region. Positions 1188–1198 (SPSNLSSSSET) are enriched in low complexity. Residues 1225–1244 (DRQNTQSDIGGSGKSTPSWQ) show a composition bias toward polar residues. Phosphoserine occurs at positions 1273 and 1288. A disordered region spans residues 1286-1324 (HLSPNKQGHSDSHYSSHSSSNTLSSNASSAHSDEKWYDG). Positions 1300-1315 (SSHSSSNTLSSNASSA) are enriched in low complexity. Serine 1344 is subject to Phosphoserine; by PLK2. Threonine 1348 bears the Phosphothreonine; by PLK2 mark. A compositionally biased stretch (low complexity) spans 1358 to 1367 (TASLGASTSS). A disordered region spans residues 1358-1382 (TASLGASTSSPRSGPGKEKVAPLWH). Serine 1367 carries the phosphoserine; by CDK5 modification. Serine 1384 bears the Phosphoserine mark. Basic and acidic residues predominate over residues 1395–1407 (LETEGHGMDRKTE). The segment at 1395 to 1493 (LETEGHGMDR…SSSGPRTFYP (99 aa)) is disordered. Residues serine 1408, serine 1409, serine 1430, serine 1449, and serine 1451 each carry the phosphoserine modification. Over residues 1417–1436 (KSQGGSSPLTRENSTFSIND) the composition is skewed to polar residues. Composition is skewed to low complexity over residues 1437–1451 (ATSHTSTMSSRHSAS) and 1471–1486 (SSQLAPSFSSSSSSSS). Phosphoserine is present on residues serine 1546 and serine 1567. The segment at 1567 to 1595 (SPTPESQKNFKFHGLSSPQSPFPSTPTSR) is disordered. Threonine 1569 bears the Phosphothreonine mark. Residues serine 1572, serine 1583, serine 1586, serine 1603, and serine 1606 each carry the phosphoserine modification. Asymmetric dimethylarginine is present on arginine 1619. 8 positions are modified to phosphoserine: serine 1621, serine 1665, serine 1668, serine 1726, serine 1729, serine 1746, serine 1747, and serine 1752. The stretch at 1753 to 1813 (PTLASKVDQL…ASDKLKKFTE (61 aa)) forms a coiled coil.

Interacts (via PDZ domain) with EPHA4 (via PDZ motif); controls neuronal morphology through regulation of the RAP1 (RAP1A or RAP1B) and RAP2 (RAP2A, RAP2B or RAP2C) GTPases. Interacts with DLG4, PDLIM5, PDLIM7 and LZTS3. Interacts with the actin cytoskeleton. Ubiquitinated and degraded by the SCF(BTRC) following phosphorylation by PLK2. In terms of processing, phosphorylated at Ser-1367 by CDK5, creating a docking site for the POLO box domains of PLK2. Subsequently, PLK2 binds and phosphorylates SIPA1L1, leading to ubiquitination and degradation by the proteasome. As to expression, detected in brain (at protein level).

The protein resides in the cytoplasm. Its subcellular location is the cytoskeleton. The protein localises to the postsynaptic density. It is found in the synapse. It localises to the synaptosome. In terms of biological role, stimulates the GTPase activity of RAP2A. Promotes reorganization of the actin cytoskeleton and recruits DLG4 to F-actin. Contributes to the regulation of dendritic spine morphogenesis. The protein is Signal-induced proliferation-associated 1-like protein 1 (Sipa1l1) of Rattus norvegicus (Rat).